A 281-amino-acid polypeptide reads, in one-letter code: MSSYAYVTVIYGNNIYLTGALVLGYTLQQTNTKYDRVILATKDVSEEYRSYLKKYYTHIIDIDYVKVNEDIFLEENTRFHDVFTKLSCLSLTQYDKIILLDLDMIIAKNIDHLFKLSAPAACLKRFHIPYGQKIPPKMICSNGKLVGSINAGLMLLEPDKREWEDIKKDIVKENFIGKFKYPEQDYLSLRYCNKWTSITFNYNFQFGLTHRVKKYHYTIDNIYVIHFSSSYKPWNRLNSDKSLREDETDFFDQHIKYYNLWMNIYSKIKHDFSKNDIKLPY.

Residues 5 to 27 (AYVTVIYGNNIYLTGALVLGYTL) form a helical membrane-spanning segment.

The protein localises to the membrane. This is an uncharacterized protein from Acanthamoeba polyphaga mimivirus (APMV).